The sequence spans 953 residues: Coatomer subunit beta (953 aa).

At Thr-2 the chain carries N-acetylthreonine. 6 HEAT repeats span residues 96–131, 132–168, 240–276, 277–314, 316–353, and 396–433; these read HEMI…KEAE, LLEP…NFEH, SERA…SAPT, AIKA…HPAH, RVLQ…SRNV, and DMAA…RFDN. The residue at position 494 (Lys-494) is an N6-acetyllysine.

As to quaternary structure, oligomeric complex that consists of at least the alpha, beta, beta', gamma, delta, epsilon and zeta subunits. Interacts with CAPN8 and PRKCE. Interacts with SCYL1. Interacts with COPG1. Interacts with ARF1 (myristoylated); this interaction is required for binding of COPB1 to Golgi membranes. Interacts (via trunk domain) with ARF1 (via switch I region); the interaction is direct. Interacts with KCNK2 (via N-terminus); this interaction increases the channel-mediated whole cell currents and promotes plasma membrane expression of KCNK2. Interacts with STX17. Interacts with TMEM115. Interacts with TMEM41B. In terms of tissue distribution, high expression in the lung, kidney, skeletal muscle and small intestine, and lower level of expression in heart, liver, spleen, stomach and fat.

It localises to the cytoplasm. Its subcellular location is the golgi apparatus membrane. The protein resides in the cytoplasmic vesicle. It is found in the COPI-coated vesicle membrane. The protein localises to the cell membrane. It localises to the endoplasmic reticulum-Golgi intermediate compartment. In terms of biological role, the coatomer is a cytosolic protein complex that binds to dilysine motifs and reversibly associates with Golgi non-clathrin-coated vesicles, which further mediate biosynthetic protein transport from the ER, via the Golgi up to the trans Golgi network. Coatomer complex is required for budding from Golgi membranes, and is essential for the retrograde Golgi-to-ER transport of dilysine-tagged proteins. In mammals, the coatomer can only be recruited by membranes associated to ADP-ribosylation factors (ARFs), which are small GTP-binding proteins; the complex also influences the Golgi structural integrity, as well as the processing, activity, and endocytic recycling of LDL receptors. Plays a functional role in facilitating the transport of kappa-type opioid receptor mRNAs into axons and enhances translation of these proteins. Required for limiting lipid storage in lipid droplets. Involved in lipid homeostasis by regulating the presence of perilipin family members PLIN2 and PLIN3 at the lipid droplet surface and promoting the association of adipocyte surface triglyceride lipase (PNPLA2) with the lipid droplet to mediate lipolysis. Involved in the Golgi disassembly and reassembly processes during cell cycle. Involved in autophagy by playing a role in early endosome function. Plays a role in organellar compartmentalization of secretory compartments including endoplasmic reticulum (ER)-Golgi intermediate compartment (ERGIC), Golgi, trans-Golgi network (TGN) and recycling endosomes, and in biosynthetic transport of CAV1. The protein is Coatomer subunit beta of Sus scrofa (Pig).